The primary structure comprises 443 residues: Phosphomevalonate kinase ERG8 (443 aa).

Residue 160–170 (ANKTGLGSSAA) coordinates ATP.

Belongs to the GHMP kinase family. Mevalonate kinase subfamily.

The enzyme catalyses (R)-5-phosphomevalonate + ATP = (R)-5-diphosphomevalonate + ADP. It functions in the pathway isoprenoid biosynthesis; isopentenyl diphosphate biosynthesis via mevalonate pathway; isopentenyl diphosphate from (R)-mevalonate: step 2/3. In terms of biological role, phosphomevalonate kinase; part of the second module of ergosterol biosynthesis pathway that includes the middle steps of the pathway. ERG8 converts 5-phosphomevalonate to 5-diphosphomevalonate. The second module is carried out in the vacuole and involves the formation of farnesyl diphosphate, which is also an important intermediate in the biosynthesis of ubiquinone, dolichol, heme and prenylated proteins. Activity by the mevalonate kinase ERG12 (FG05912) first converts mevalonate into 5-phosphomevalonate. 5-phosphomevalonate is then further converted to 5-diphosphomevalonate by the phosphomevalonate kinase ERG8 (FG09764). The diphosphomevalonate decarboxylase ERG19 (FG10424) then produces isopentenyl diphosphate. The isopentenyl-diphosphate delta-isomerase IDI1 (FG09722) then catalyzes the 1,3-allylic rearrangement of the homoallylic substrate isopentenyl (IPP) to its highly electrophilic allylic isomer, dimethylallyl diphosphate (DMAPP). Finally the farnesyl diphosphate synthase ERG20 (FG06784) catalyzes the sequential condensation of isopentenyl pyrophosphate with dimethylallyl pyrophosphate, and then with the resultant geranylpyrophosphate to the ultimate product farnesyl pyrophosphate. In Gibberella zeae (strain ATCC MYA-4620 / CBS 123657 / FGSC 9075 / NRRL 31084 / PH-1) (Wheat head blight fungus), this protein is Phosphomevalonate kinase ERG8.